We begin with the raw amino-acid sequence, 337 residues long: GTP 3',8-cyclase (337 aa).

The Radical SAM core domain occupies 18–242; the sequence is NFGRRFHYLR…DKADILDGPA (225 aa). Residue arginine 27 coordinates GTP. 2 residues coordinate [4Fe-4S] cluster: cysteine 34 and cysteine 38. Tyrosine 40 provides a ligand contact to S-adenosyl-L-methionine. Cysteine 41 is a [4Fe-4S] cluster binding site. Residue arginine 76 coordinates GTP. Glycine 80 is an S-adenosyl-L-methionine binding site. Threonine 107 lines the GTP pocket. Serine 131 is a binding site for S-adenosyl-L-methionine. Lysine 168 is a binding site for GTP. Methionine 202 provides a ligand contact to S-adenosyl-L-methionine. [4Fe-4S] cluster contacts are provided by cysteine 265 and cysteine 268. GTP is bound at residue 270–272; sequence RLR. Cysteine 282 provides a ligand contact to [4Fe-4S] cluster.

The protein belongs to the radical SAM superfamily. MoaA family. Monomer and homodimer. [4Fe-4S] cluster is required as a cofactor.

The enzyme catalyses GTP + AH2 + S-adenosyl-L-methionine = (8S)-3',8-cyclo-7,8-dihydroguanosine 5'-triphosphate + 5'-deoxyadenosine + L-methionine + A + H(+). Its pathway is cofactor biosynthesis; molybdopterin biosynthesis. Functionally, catalyzes the cyclization of GTP to (8S)-3',8-cyclo-7,8-dihydroguanosine 5'-triphosphate. This chain is GTP 3',8-cyclase, found in Shewanella denitrificans (strain OS217 / ATCC BAA-1090 / DSM 15013).